A 267-amino-acid polypeptide reads, in one-letter code: LysM and putative peptidoglycan-binding domain-containing protein 4 (267 aa).

Topologically, residues 1–211 (MRRGDPPPRA…RSNGADWGIQ (211 aa)) are extracellular. The tract at residues 30–64 (HRQEEPEASSEDEELNVMELRPRSRDSSSKEKEGV) is disordered. Acidic residues predominate over residues 35–45 (PEASSEDEELN). A compositionally biased stretch (basic and acidic residues) spans 49–64 (LRPRSRDSSSKEKEGV). One can recognise a LysM domain in the interval 70-114 (LERDISHEDNLSKLALQYGCKVADIKRVNNLFQEQDMYALKSIKI). Asn79 carries N-linked (GlcNAc...) asparagine glycosylation. A disordered region spans residues 130–152 (RTPQQRPSHDAAPSNSAMASVSG). The span at 142–152 (PSNSAMASVSG) shows a compositional bias: polar residues. The helical transmembrane segment at 212–232 (WWNAVIAMLLIGIVLPIFYVV) threads the bilayer. Residues 233–267 (YYKTKDSGESAVDNVGVNISVSTSNSTREYNGKSP) are Cytoplasmic-facing.

Its subcellular location is the membrane. In Danio rerio (Zebrafish), this protein is LysM and putative peptidoglycan-binding domain-containing protein 4 (lysmd4).